The sequence spans 170 residues: Adenine phosphoribosyltransferase (170 aa).

This sequence belongs to the purine/pyrimidine phosphoribosyltransferase family. In terms of assembly, homodimer.

The protein resides in the cytoplasm. It carries out the reaction AMP + diphosphate = 5-phospho-alpha-D-ribose 1-diphosphate + adenine. The protein operates within purine metabolism; AMP biosynthesis via salvage pathway; AMP from adenine: step 1/1. Catalyzes a salvage reaction resulting in the formation of AMP, that is energically less costly than de novo synthesis. This Pseudothermotoga lettingae (strain ATCC BAA-301 / DSM 14385 / NBRC 107922 / TMO) (Thermotoga lettingae) protein is Adenine phosphoribosyltransferase.